Consider the following 112-residue polypeptide: Carboxysome shell protein CcmK4 (112 aa).

A BMC domain is found at 6–92 (AVGSIETIGF…PHENVVAVLP (87 aa)).

The protein belongs to the bacterial microcompartments protein family. CcmK subfamily. As to quaternary structure, homohexamer. Interacts with full-length CcmM. Forms mixed heterohexamers with CcmK3, probably with 1:5 CcmK3:CcmK4 stoichiometry. Only very weak interactions with CcmK1 and CcmK2 were seen.

It is found in the carboxysome. A probably minor shell protein component of the carboxysome, a polyhedral inclusion where RuBisCO (ribulose bisphosphate carboxylase, rbcL-rbcS) is sequestered. The central pore probably regulates metabolite flux, as might the gaps between assembled homohexamers. Homohexamers make sheets that probably form the facets of the polyhedral carboxysome. This subunit probably makes both homohexamers and heterohexamers with CcmK3. This is Carboxysome shell protein CcmK4 from Synechocystis sp. (strain ATCC 27184 / PCC 6803 / Kazusa).